The sequence spans 350 residues: Integrin beta-1-binding protein 2 (350 aa).

Zn(2+) contacts are provided by Cys-5, Cys-10, Cys-24, and His-27. One can recognise a CHORD 1 domain in the interval 5–64 (CYNKGCGQHFDPNTNLPDSCRYHPGVPIFHDALKGWSCCRKRTVDFSEFLNIKGCTVGLH). An SH3-binding motif is present at residues 28 to 31 (PGVP). 4 residues coordinate Zn(2+): Cys-42, Cys-43, Cys-59, and His-64. An SH3-binding motif is present at residues 70–79 (PEVPPQPEGP). Positions 72-92 (VPPQPEGPATSSLQEQKPLNT) are disordered. Residues 80–92 (ATSSLQEQKPLNT) are compositionally biased toward polar residues. Positions 150 and 155 each coordinate Zn(2+). Positions 150 to 209 (CQNPGCDAVYQGPESDATPCTYHPGAPRFHEGMKSWSCCGIQTLDFGAFLAQPGCRVGRH) constitute a CHORD 2 domain. The SH2-binding signature appears at 159–162 (YQGP). The Zn(2+) site is built by Cys-169 and His-172. The SH3-binding motif lies at 173–176 (PGAP). 4 residues coordinate Zn(2+): Cys-187, Cys-188, Cys-204, and His-209. Positions 216–305 (PASCRHDWHQ…ADPGSWAQLE (90 aa)) constitute a CS domain. The SH2-binding motif lies at 235 to 238 (YGQI). Residues 317–350 (GVLLEMDEEESEDSDDDLSWTEEEDEEEEEAMGE) form a disordered region. A compositionally biased stretch (acidic residues) spans 321-350 (EMDEEESEDSDDDLSWTEEEDEEEEEAMGE).

Interacts with beta-1 integrin subunit. This interaction is regulated by divalent cations, and it occurs only in absence of calcium. Expressed in skeletal and cardiac muscles but not in other tissues. Is localized in rows flanking the Z line containing alpha-actinin.

Its function is as follows. May play a role during maturation and/or organization of muscles cells. The polypeptide is Integrin beta-1-binding protein 2 (Itgb1bp2) (Mus musculus (Mouse)).